Here is an 810-residue protein sequence, read N- to C-terminus: Zinc finger transcription factor YRR1 (810 aa).

The interval 1 to 47 is disordered; that stretch reads MKRRSDALLGSFQATNVTPPSDNSNSTAGGANGSNSGTPTSTSGKKR. The segment covering 12–22 has biased composition (polar residues); the sequence is FQATNVTPPSD. The segment covering 23 to 43 has biased composition (low complexity); the sequence is NSNSTAGGANGSNSGTPTSTS. The zn(2)-C6 fungal-type DNA-binding region spans 54-82; that stretch reads CGFCRRRKLRCDQQKPMCSTCISRNLTTC. The interval 722–742 is disordered; sequence ELDPQSDNPSSEAKIVSDRQR.

It localises to the cytoplasm. The protein resides in the nucleus. Its function is as follows. Transcription factor involved in the regulation of multidrug resistance genes. Acts in concert with YRR1. In Saccharomyces cerevisiae (strain ATCC 204508 / S288c) (Baker's yeast), this protein is Zinc finger transcription factor YRR1 (YRR1).